Here is a 555-residue protein sequence, read N- to C-terminus: Potassium-transporting ATPase potassium-binding subunit (555 aa).

The next 10 helical transmembrane spans lie at 2-22 (IWVAVVITMLLFILVAKPTGI), 60-80 (QYALSLVLLNGFMIVVVYFIF), 130-150 (IGITFLMFAAPATTLALVMAF), 173-193 (VFLPIAFVTALVFVALGVPQT), 246-266 (MSNILQMMLMMLLPTALPFTY), 278-298 (ILFVSLFMVFLLGFITITTSE), 374-394 (AGFVNIITYAIIAVFISGLMV), 412-432 (LIAVTILFHPLLILGFSALAL), 483-503 (LVMFLGRYFSLVTMLAVAASL), and 525-545 (GIFIGTIVIVGALTFFPMLVL).

Belongs to the KdpA family. As to quaternary structure, the system is composed of three essential subunits: KdpA, KdpB and KdpC.

It localises to the cell membrane. Its function is as follows. Part of the high-affinity ATP-driven potassium transport (or Kdp) system, which catalyzes the hydrolysis of ATP coupled with the electrogenic transport of potassium into the cytoplasm. This subunit binds the extracellular potassium ions and delivers the ions to the membrane domain of KdpB through an intramembrane tunnel. In Bacillus thuringiensis subsp. konkukian (strain 97-27), this protein is Potassium-transporting ATPase potassium-binding subunit.